The chain runs to 372 residues: tRNA-specific 2-thiouridylase MnmA (372 aa).

Residues 7 to 14 (GLSGGVDS) and Met-33 contribute to the ATP site. Residues 104-106 (NPD) are interaction with target base in tRNA. Cys-109 acts as the Nucleophile in catalysis. Cysteines 109 and 202 form a disulfide. Gly-134 serves as a coordination point for ATP. The tract at residues 152–154 (KDQ) is interaction with tRNA. Residue Cys-202 is the Cysteine persulfide intermediate of the active site. The segment at 310-311 (RY) is interaction with tRNA.

Belongs to the MnmA/TRMU family.

The protein localises to the cytoplasm. The catalysed reaction is S-sulfanyl-L-cysteinyl-[protein] + uridine(34) in tRNA + AH2 + ATP = 2-thiouridine(34) in tRNA + L-cysteinyl-[protein] + A + AMP + diphosphate + H(+). Catalyzes the 2-thiolation of uridine at the wobble position (U34) of tRNA, leading to the formation of s(2)U34. The chain is tRNA-specific 2-thiouridylase MnmA from Mesomycoplasma hyopneumoniae (strain 7448) (Mycoplasma hyopneumoniae).